Consider the following 324-residue polypeptide: tRNA(Ile)-lysidine synthase (324 aa).

Residue 33 to 38 (SGGPDS) participates in ATP binding.

This sequence belongs to the tRNA(Ile)-lysidine synthase family.

Its subcellular location is the cytoplasm. The catalysed reaction is cytidine(34) in tRNA(Ile2) + L-lysine + ATP = lysidine(34) in tRNA(Ile2) + AMP + diphosphate + H(+). Its function is as follows. Ligates lysine onto the cytidine present at position 34 of the AUA codon-specific tRNA(Ile) that contains the anticodon CAU, in an ATP-dependent manner. Cytidine is converted to lysidine, thus changing the amino acid specificity of the tRNA from methionine to isoleucine. In Thermobifida fusca (strain YX), this protein is tRNA(Ile)-lysidine synthase.